A 635-amino-acid chain; its full sequence is CCR4-NOT transcription complex subunit 10 (635 aa).

Position 45 is a phosphothreonine (T45). Positions 131-165 (LVARLEALEKAMAALVATLQLQLLLATNQLNRAEA) form a coiled coil. 2 disordered regions span residues 396–416 (EERQSQSETPSTKPYAPQSAG) and 450–474 (SEDVEAPEPKDPTQESWRHPQDNNF). Residues 456–470 (PEPKDPTQESWRHPQ) are compositionally biased toward basic and acidic residues.

This sequence belongs to the CNOT10 family. In terms of assembly, component of the CCR4-NOT complex. CNOT10 and CNOT11 form a subcomplex docked to the CNOT1 scaffold.

It is found in the cytoplasm. Its subcellular location is the nucleus. Its function is as follows. Component of the CCR4-NOT complex which is one of the major cellular mRNA deadenylases and is linked to various cellular processes including bulk mRNA degradation, miRNA-mediated repression, translational repression during translational initiation and general transcription regulation. Additional complex functions may be a consequence of its influence on mRNA expression. Is not required for association of CNOT7 to the CCR4-NOT complex. In Drosophila melanogaster (Fruit fly), this protein is CCR4-NOT transcription complex subunit 10 (Not10).